Reading from the N-terminus, the 65-residue chain is Conotoxin Cal16.1 (65 aa).

The N-terminal stretch at 1–19 (MRCLSIFVLLVLLVSFAVA) is a signal peptide. Positions 20–48 (ELDVEGEIVKQLLTRGTLKDADFWKRLEM) are excised as a propeptide. Gln49 bears the Pyrrolidone carboxylic acid mark. 2 disulfide bridges follow: Cys51–Cys60 and Cys53–Cys61. At Glu63 the chain carries Glutamic acid 1-amide.

As to expression, expressed by the venom duct.

The protein localises to the secreted. Probable neurotoxin with unknown target. Possibly targets ion channels. This Californiconus californicus (California cone) protein is Conotoxin Cal16.1.